The primary structure comprises 251 residues: BRI3-binding protein (251 aa).

Helical transmembrane passes span 13 to 33 (AGLLLLLLLLLLLGLLAPGAQ), 125 to 145 (ALLLVGVVLLAYWFLSLTLGF), 146 to 166 (TFSVLHVVFGRFFWIVRVVLF), and 185 to 205 (VLPLCFVVAVYFMTGPMGFYW). Positions 217 to 247 (NPSVEEKLEHLEKQVRLLNIRLNRVLESLDR) form a coiled coil. Residue K229 is modified to N6-acetyllysine. The residue at position 248 (S248) is a Phosphoserine.

In terms of assembly, interacts with LETMD1. Interacts with BRI3 (isoforms 1 and 2); the interaction with isoform 2 is weaker than with isoform 1. Interacts with BRI3; the interaction is weak. Interacts with TMEM238L. Most abundantly expressed in brain, liver and kidney. Overexpressed in leukemia and lymphoma cell lines, as well as in various carcinomas.

It localises to the mitochondrion outer membrane. Its function is as follows. Involved in tumorigenesis and may function by stabilizing p53/TP53. This chain is BRI3-binding protein, found in Homo sapiens (Human).